The chain runs to 1220 residues: Plasma membrane calcium-transporting ATPase 1 (1220 aa).

Glycine 2 is subject to N-acetylglycine. The Cytoplasmic portion of the chain corresponds to 2–105; sequence GDMANNSVAY…KTFLQLVWEA (104 aa). Phosphoserine is present on residues serine 8 and serine 17. The chain crosses the membrane as a helical span at residues 106–126; that stretch reads LQDVTLIILEIAAIVSLGLSF. At 127 to 154 the chain is on the extracellular side; the sequence is YQPPEGDNALCGEVSVGEEEGEGETGWI. Residues 155-175 form a helical membrane-spanning segment; the sequence is EGAAILLSVVCVVLVTAFNDW. Topologically, residues 176–366 are cytoplasmic; sequence SKEKQFRGLQ…KEKSVLQGKL (191 aa). The tract at residues 297 to 356 is disordered; that stretch reads EEEKKDEKKKEKKNKKQDGAIENRNKAKAQDGAAMEMQPLKSEEGGDGDEKDKKKANLPK. Basic and acidic residues-rich tracts occupy residues 312-325 and 337-356; these read KQDG…KAKA and KSEE…NLPK. The residue at position 338 (serine 338) is a Phosphoserine. The chain crosses the membrane as a helical span at residues 367–386; it reads TKLAVQIGKAGLLMSAITVI. Residues 387 to 418 are Extracellular-facing; the sequence is ILVLYFVIDTFWVQKRPWLAECTPIYIQYFVK. The helical transmembrane segment at 419–439 threads the bilayer; sequence FFIIGVTVLVVAVPEGLPLAV. Residues 440–855 lie on the Cytoplasmic side of the membrane; the sequence is TISLAYSVKK…RNVYDSISKF (416 aa). The 4-aspartylphosphate intermediate role is filled by aspartate 475. Mg(2+) is bound by residues aspartate 475, threonine 477, and aspartate 797. A helical membrane pass occupies residues 856–876; that stretch reads LQFQLTVNVVAVIVAFTGACI. Over 877–882 the chain is Extracellular; sequence TQDSPL. The helical transmembrane segment at 883–903 threads the bilayer; sequence KAVQMLWVNLIMDTLASLALA. Over 904 to 927 the chain is Cytoplasmic; that stretch reads TEPPTESLLLRKPYGRNKPLISRT. A helical membrane pass occupies residues 928–948; sequence MMKNILGHAFYQLVVVFTLLF. The Extracellular segment spans residues 949 to 971; that stretch reads AGEKFFDIDSGRNAPLHAPPSEH. A helical membrane pass occupies residues 972-991; that stretch reads YTIVFNTFVLMQLFNEINAR. Over 992–1005 the chain is Cytoplasmic; that stretch reads KIHGERNVFEGIFN. The helical transmembrane segment at 1006–1027 threads the bilayer; that stretch reads NAIFCTIVLGTFVVQIIIVQFG. Topologically, residues 1028 to 1039 are extracellular; the sequence is GKPFSCSELSIE. The helical transmembrane segment at 1040–1060 threads the bilayer; that stretch reads QWLWSIFLGMGTLLWGQLIST. Topologically, residues 1061–1220 are cytoplasmic; that stretch reads IPTSRLKFLK…SPLHSLETSL (160 aa). Residues 1100 to 1117 form a calmodulin-binding subdomain A region; the sequence is LRRGQILWFRGLNRIQTQ. Threonine 1116 carries the post-translational modification Phosphothreonine; by PKC. The tract at residues 1118–1220 is required for basolateral membrane targeting; the sequence is IRVVNAFRSS…SPLHSLETSL (103 aa). 2 positions are modified to phosphoserine: serine 1140 and serine 1155. Residues 1160 to 1220 form a disordered region; it reads PLIDDTDAED…SPLHSLETSL (61 aa). The residue at position 1165 (threonine 1165) is a Phosphothreonine. Serine 1178 is subject to Phosphoserine; by PKA. A Phosphoserine modification is found at serine 1182. The span at 1200–1220 shows a compositional bias: polar residues; that stretch reads MNKSATSSSPGSPLHSLETSL.

It belongs to the cation transport ATPase (P-type) (TC 3.A.3) family. Type IIB subfamily. In terms of assembly, monomer. Dimer. Oligomer. Calmodulin binding. Interacts with PDZD11. Interacts with SLC35G1 and STIM1; inhibits calcium-transporting ATPase activity after store depletion. Interacts with YWHAE; interacts with the monomeric and dimeric forms of the YWHAE but prefer the monomer form; this interaction inhibits calcium-transporting ATPase activity. Interacts with NPTN; this interaction stabilizes ATP2B1 and increases ATPase activity; this interaction controls T cell calcium homeostasis following T cell activation. Interacts with EPB41; regulates small intestinal calcium absorption through regulation of membrane expression of ATP2B1. As to expression, isoform B: Ubiquitously expressed. Isoform C: Found in brain cortex, skeletal muscle and heart muscle. Isoform D: Has only been found in fetal skeletal muscle. Isoform K: Found in small intestine and liver. Abundantly expressed in the endometrial epithelial cells and glandular epithelial cells in early-proliferative phase and early-secretory phases.

The protein localises to the cell membrane. The protein resides in the basolateral cell membrane. Its subcellular location is the synapse. It is found in the presynaptic cell membrane. It localises to the cytoplasmic vesicle. The protein localises to the secretory vesicle. The protein resides in the synaptic vesicle membrane. It carries out the reaction Ca(2+)(in) + ATP + H2O = Ca(2+)(out) + ADP + phosphate + H(+). Its function is as follows. Catalyzes the hydrolysis of ATP coupled with the transport of calcium from the cytoplasm to the extracellular space thereby maintaining intracellular calcium homeostasis. Plays a role in blood pressure regulation through regulation of intracellular calcium concentration and nitric oxide production leading to regulation of vascular smooth muscle cells vasoconstriction. Positively regulates bone mineralization through absorption of calcium from the intestine. Plays dual roles in osteoclast differentiation and survival by regulating RANKL-induced calcium oscillations in preosteoclasts and mediating calcium extrusion in mature osteoclasts. Regulates insulin sensitivity through calcium/calmodulin signaling pathway by regulating AKT1 activation and NOS3 activation in endothelial cells. May play a role in synaptic transmission by modulating calcium and proton dynamics at the synaptic vesicles. In Homo sapiens (Human), this protein is Plasma membrane calcium-transporting ATPase 1.